Consider the following 434-residue polypeptide: MKLIIFLTVTLCTLVTGLDSVYIRQYYKLSHKHRPQHRECQCLNGGTCITYRFFSQIKRCLCPEGYGGLHCEIDTNSICYSGNGEDYRGMAEDPGCLYWDHPSVIRWGDYHADLKNALQLGLGKHNYCRNPNGRSRPWCYTKRRYSIQETPCSTIEKCERTCGQRSFSKYFKIVGGSQAEVETQPWIAGIFQNIMGTDQFLCGGSLIDPCWVLTAAHCFYNPTKKQPNKSVYKVFLGKSILNTNDEHEQVFMVDEIISHPDFTDHTGGNDNDIALIRIRTASGQCAVESNYVRTVCLPEKNLNLYDNTWCEIAGYGKQNSYDIYYAQRLMSATVNLISQDDCKNKYYDSTRVTDNMVCAGDPLWETDACKGDSGGPMVCEHNGRMTLYGIVSWGDGCAKKNKPGVYTRVTRYLNWIDSNMNAVFTKSRSFREPK.

Positions 1–20 are cleaved as a signal peptide; that stretch reads MKLIIFLTVTLCTLVTGLDS. The EGF-like domain maps to 36-72; that stretch reads QHRECQCLNGGTCITYRFFSQIKRCLCPEGYGGLHCE. Disulfide bonds link C40-C48, C42-C60, C62-C71, C79-C158, C96-C139, C128-C152, C162-C296, C202-C218, C210-C285, C310-C379, C342-C358, and C369-C397. A Kringle domain is found at 79–158; it reads CYSGNGEDYR…ETPCSTIEKC (80 aa). Residues 159-172 are connecting peptide; the sequence is ERTCGQRSFSKYFK. Residues 173–421 enclose the Peptidase S1 domain; the sequence is IVGGSQAEVE…YLNWIDSNMN (249 aa). H217 functions as the Charge relay system in the catalytic mechanism. An N-linked (GlcNAc...) asparagine glycan is attached at N228. D272 (charge relay system) is an active-site residue. Residue S373 is the Charge relay system of the active site.

The protein belongs to the peptidase S1 family.

It localises to the secreted. The enzyme catalyses Specific cleavage of Arg-|-Val bond in plasminogen to form plasmin.. In terms of biological role, specifically cleaves the zymogen plasminogen to form the active enzyme plasmin. This chain is Urokinase-type plasminogen activator (PLAU), found in Gallus gallus (Chicken).